The following is a 455-amino-acid chain: Beta-cyclopiazonate dehydrogenase (455 aa).

A signal peptide spans 1-20 (MATRIASFIGISTVASLALA).

The protein belongs to the beta-cyclopiazonate dehydrogenase family. Requires FAD as cofactor.

The catalysed reaction is beta-cyclopiazonate + A = alpha-cyclopiazonate + AH2. Its function is as follows. Beta-cyclopiazonate dehydrogenase involved in the synthesis of the fungal neurotoxin alpha-cyclopiazonic acid (CPA). CpaO carries out the dehydrogenation of beta-CPA to yield an unstable enimine product, which is captured by intramolecular cyclization to create the pentacyclic fused scaffold of alpha-cyclopiazonate. This Aspergillus flavus (strain ATCC 200026 / FGSC A1120 / IAM 13836 / NRRL 3357 / JCM 12722 / SRRC 167) protein is Beta-cyclopiazonate dehydrogenase.